The primary structure comprises 572 residues: Methionine--tRNA ligase (572 aa).

The 'HIGH' region motif lies at 11-21; the sequence is PYINGIKHLGN. Zn(2+) contacts are provided by C143, C146, C156, and C159. Positions 346-350 match the 'KMSKS' region motif; that stretch reads QFSTS. An ATP-binding site is contributed by T349.

The protein belongs to the class-I aminoacyl-tRNA synthetase family. MetG type 1 subfamily. As to quaternary structure, monomer. Zn(2+) serves as cofactor.

It localises to the cytoplasm. It carries out the reaction tRNA(Met) + L-methionine + ATP = L-methionyl-tRNA(Met) + AMP + diphosphate. Functionally, is required not only for elongation of protein synthesis but also for the initiation of all mRNA translation through initiator tRNA(fMet) aminoacylation. This is Methionine--tRNA ligase from Cereibacter sphaeroides (strain ATCC 17029 / ATH 2.4.9) (Rhodobacter sphaeroides).